The following is a 206-amino-acid chain: Protein GrpE (206 aa).

Residues 1–15 (MTDSNGQKDNNQDQA) are compositionally biased toward polar residues. Residues 1 to 38 (MTDSNGQKDNNQDQAQPADPVVSKPYIMPDDPEEGTNE) form a disordered region.

The protein belongs to the GrpE family. Homodimer.

The protein localises to the cytoplasm. Functionally, participates actively in the response to hyperosmotic and heat shock by preventing the aggregation of stress-denatured proteins, in association with DnaK and GrpE. It is the nucleotide exchange factor for DnaK and may function as a thermosensor. Unfolded proteins bind initially to DnaJ; upon interaction with the DnaJ-bound protein, DnaK hydrolyzes its bound ATP, resulting in the formation of a stable complex. GrpE releases ADP from DnaK; ATP binding to DnaK triggers the release of the substrate protein, thus completing the reaction cycle. Several rounds of ATP-dependent interactions between DnaJ, DnaK and GrpE are required for fully efficient folding. This is Protein GrpE from Rhodopseudomonas palustris (strain BisB5).